The following is a 616-amino-acid chain: Xaa-Pro aminopeptidase app-1 (616 aa).

Residues arginine 78 and histidine 392 each coordinate a peptide. Positions 413, 424, and 487 each coordinate Zn(2+). The a peptide site is built by histidine 487, histidine 496, and glutamate 522. Zn(2+) contacts are provided by glutamate 522 and glutamate 536.

It belongs to the peptidase M24B family. As to quaternary structure, homodimer. May interact with pid-2, pid-4 and pid-5. The cofactor is Zn(2+). In terms of tissue distribution, specifically expressed in the intestine.

Its subcellular location is the cytoplasm. The catalysed reaction is Release of any N-terminal amino acid, including proline, that is linked to proline, even from a dipeptide or tripeptide.. Its activity is regulated as follows. Strongly inhibited by the metal ion chelators EDTA and 1,10-phenanthroline. Also inhibited by apstatin. Activity towards bradykinin is inhibited by Mn(2+) and Zn(2+) at all concentrations tested, whereas Co(2+) is inhibitory at concentrations above 100 uM and activatory at 10 uM. Functionally, catalyzes the removal of a penultimate prolyl residue from the N-termini of peptides, such as Arg-Pro-Pro. Has activity towards the flp-9 neuropeptide KPSFVRF-amide. This Caenorhabditis elegans protein is Xaa-Pro aminopeptidase app-1.